The sequence spans 145 residues: MRAVIQRVRHAGVDVDARTTGAIEQGLMVLVGVAPDDTQTRADKMLHKLLGLRVFSDEAGKMNLNVQQVEGGLLLVPQFTLMANTTKGLRPGFDGAAPPAHGEALFDYLVAQARHAWPYVATGEFGADMQVSLLNDGPVTFIVET.

The short motif at 137-138 (GP) is the Gly-cisPro motif, important for rejection of L-amino acids element.

It belongs to the DTD family. In terms of assembly, homodimer.

It localises to the cytoplasm. The enzyme catalyses glycyl-tRNA(Ala) + H2O = tRNA(Ala) + glycine + H(+). It carries out the reaction a D-aminoacyl-tRNA + H2O = a tRNA + a D-alpha-amino acid + H(+). An aminoacyl-tRNA editing enzyme that deacylates mischarged D-aminoacyl-tRNAs. Also deacylates mischarged glycyl-tRNA(Ala), protecting cells against glycine mischarging by AlaRS. Acts via tRNA-based rather than protein-based catalysis; rejects L-amino acids rather than detecting D-amino acids in the active site. By recycling D-aminoacyl-tRNA to D-amino acids and free tRNA molecules, this enzyme counteracts the toxicity associated with the formation of D-aminoacyl-tRNA entities in vivo and helps enforce protein L-homochirality. This chain is D-aminoacyl-tRNA deacylase, found in Chromohalobacter salexigens (strain ATCC BAA-138 / DSM 3043 / CIP 106854 / NCIMB 13768 / 1H11).